Reading from the N-terminus, the 717-residue chain is Methylcrotonoyl-CoA carboxylase subunit alpha, mitochondrial (717 aa).

The transit peptide at 1–38 (MAAAALLAAVDRNQLRRVPILLLQPREWAWKLRTMKYG) directs the protein to the mitochondrion. The Biotin carboxylation domain occupies 45–490 (ITKVLIANRG…HTDFIPQHHK (446 aa)). Lys159 lines the ATP pocket. The ATP-grasp domain maps to 163 to 360 (KSIMAAAGVP…LVEWQLRIAA (198 aa)). N6-acetyllysine occurs at positions 180 and 193. ATP-binding positions include Lys201 and 207–208 (GG). Lys233 is modified (N6-acetyllysine). ATP contacts are provided by His251, His278, and Glu318. The active site involves Arg335. Lys490 is subject to N6-acetyllysine. N6-acetyllysine; alternate is present on Lys577. An N6-succinyllysine; alternate modification is found at Lys577. In terms of domain architecture, Biotinyl-binding spans 622-711 (SIEVGIPVPK…NRHAPLVEFE (90 aa)). Lys677 is modified (N6-biotinyllysine).

In terms of assembly, probably a dodecamer composed of six biotin-containing alpha subunits (MCCC1) and six beta (MCCC2) subunits. Interacts (via the biotin carboxylation domain) with SIRT4. The cofactor is biotin. In terms of processing, acetylated.

It localises to the mitochondrion matrix. The enzyme catalyses 3-methylbut-2-enoyl-CoA + hydrogencarbonate + ATP = 3-methyl-(2E)-glutaconyl-CoA + ADP + phosphate + H(+). The protein operates within amino-acid degradation; L-leucine degradation; (S)-3-hydroxy-3-methylglutaryl-CoA from 3-isovaleryl-CoA: step 2/3. Biotin-attachment subunit of the 3-methylcrotonyl-CoA carboxylase, an enzyme that catalyzes the conversion of 3-methylcrotonyl-CoA to 3-methylglutaconyl-CoA, a critical step for leucine and isovaleric acid catabolism. This is Methylcrotonoyl-CoA carboxylase subunit alpha, mitochondrial (Mccc1) from Mus musculus (Mouse).